Here is a 297-residue protein sequence, read N- to C-terminus: 3-mercaptopyruvate sulfurtransferase (297 aa).

Ala2 carries the N-acetylalanine modification. The Rhodanese 1 domain maps to 25–144; that stretch reads ASQPLKLLDA…WLSQNLPISS (120 aa). A Phosphoserine modification is found at Ser35. Residue Lys40 is modified to N6-acetyllysine; alternate. Position 40 is an N6-succinyllysine; alternate (Lys40). The hinge stretch occupies residues 145 to 160; sequence GKSPSEPAEFCAQLDP. N6-succinyllysine is present on residues Lys146 and Lys164. In terms of domain architecture, Rhodanese 2 spans 174 to 288; the sequence is DARRFQVVDA…WYMRAQPEHV (115 aa). Arg188 contributes to the substrate binding site. Residue Cys248 is the Cysteine persulfide intermediate of the active site.

As to quaternary structure, monomer (active form). Homodimer; disulfide-linked (inactive form). The N-terminus is blocked. Expressed in liver, heart, kidney and brain. Localizes to tubular epithelium in the kidney, pericentral hepatocytes in the liver, cardiac cells in the heart and neuroglial cells in the brain. Also expressed in vascular endothelium of the thoracic aorta. Weak expression in lung and thymus.

It is found in the cytoplasm. It localises to the mitochondrion. Its subcellular location is the synapse. The protein localises to the synaptosome. It catalyses the reaction 2-oxo-3-sulfanylpropanoate + [thioredoxin]-dithiol = [thioredoxin]-disulfide + hydrogen sulfide + pyruvate + H(+). By oxidative stress, and thioredoxin. Under oxidative stress conditions, the catalytic cysteine site is converted to a sulfenate which inhibits the MPST enzyme activity. Reduced thioredoxin cleaves an intersubunit disulfide bond to turn on the redox switch and reactivate the enzyme. Inhibited by different oxidants, hydrogen peroxide and tetrathionate. Functionally, transfer of a sulfur ion to cyanide or to other thiol compounds. Also has weak rhodanese activity. Detoxifies cyanide and is required for thiosulfate biosynthesis. Acts as an antioxidant. In combination with cysteine aminotransferase (CAT), contributes to the catabolism of cysteine and is an important producer of hydrogen sulfide in the brain, retina and vascular endothelial cells. Hydrogen sulfide H(2)S is an important synaptic modulator, signaling molecule, smooth muscle contractor and neuroprotectant. Its production by the 3MST/CAT pathway is regulated by calcium ions. This Rattus norvegicus (Rat) protein is 3-mercaptopyruvate sulfurtransferase (Mpst).